The chain runs to 130 residues: Small ribosomal subunit protein uS9 (130 aa).

It belongs to the universal ribosomal protein uS9 family.

The protein is Small ribosomal subunit protein uS9 of Marinobacter nauticus (strain ATCC 700491 / DSM 11845 / VT8) (Marinobacter aquaeolei).